The following is a 311-amino-acid chain: MQLEFLGTGAGSPGKFRNVTSTALRLLDERNEVWLFDVGEGTQHQILRTTLKPRKIAKIFITHLHGDHIFGLPGLLSSRSFQGGDEPLTIYGPVGVRDFVQTALRVSGTHLSYPLKFHEITKAETVFEDATFKVSCEPLDHRIACFGYRVEEADHPGELQADRLKALNIPSGPVYGQLKAGKTVTLPDGRTINGQDYIAAPQKGRTVTILGDTRRTPHAVSLAQDADALVHESTFGKDEGKLAHNYYHSTSTQAAQVAQQAGVKQLLLTHISARYTGKLSKELQKQAQKVFSHSKVVRDFDVIDIPLPEKG.

Residues histidine 63, histidine 65, aspartate 67, histidine 68, histidine 141, aspartate 212, and histidine 270 each coordinate Zn(2+). The active-site Proton acceptor is aspartate 67.

This sequence belongs to the RNase Z family. In terms of assembly, homodimer. The cofactor is Zn(2+).

The enzyme catalyses Endonucleolytic cleavage of RNA, removing extra 3' nucleotides from tRNA precursor, generating 3' termini of tRNAs. A 3'-hydroxy group is left at the tRNA terminus and a 5'-phosphoryl group is left at the trailer molecule.. Its function is as follows. Zinc phosphodiesterase, which displays some tRNA 3'-processing endonuclease activity. Probably involved in tRNA maturation, by removing a 3'-trailer from precursor tRNA. The polypeptide is Ribonuclease Z (Lactiplantibacillus plantarum (strain ATCC BAA-793 / NCIMB 8826 / WCFS1) (Lactobacillus plantarum)).